We begin with the raw amino-acid sequence, 475 residues long: FAD-dependent monooxygenase spyC (475 aa).

An N-terminal signal peptide occupies residues 1-24 (MTAKPPFKVIIVGGSIAGLTLAHC). The FAD site is built by glutamate 36, glycine 50, arginine 109, aspartate 310, and alanine 323. Residues 444-464 (LLIPFLYPVVAFSLCVLAWIG) form a helical membrane-spanning segment.

Belongs to the paxM FAD-dependent monooxygenase family. Requires FAD as cofactor.

It is found in the membrane. It carries out the reaction (2E,6E,10E)-geranylgeranyl-triacetate lactone + AH2 + O2 = (S)-(2E,6E,10E)-epoxygeranylgeranyl-triacetate lactone + A + H2O. It functions in the pathway secondary metabolite biosynthesis; terpenoid biosynthesis. FAD-dependent monooxygenase spyC; part of the gene cluster that mediates the biosynthesis of meroterpenoids called sartorypyrones. Within the pathway, spyC catalyzes the epoxidation of geranylgeranyl-triacetate lactone at the terminal olein to yield epoxygeranylgeranyl-triacetate lactone. The biosynthesis of sartorypyrones begins with the production of triacetic acid lactone (TAL) by the NR-PKS spyA using one molecule of acetyl-CoA and two molecules of malonyl-CoA. The prenyltransferase spyF then conjugates geranylgeranyl pyrophosphate (GGPP) to TAL to form geranylgeranyl-triacetate lactone, for which the pathway-specific geranylgeranyl pyrophosphate synthase (GGPS) spyE is required to provide GGPP. Subsequently, geranylgeranyl-triacetate lactone is epoxidized at the terminal olein by the FAD-dependent monooxygenase spyC, followed by cyclization of the terpenoid component catalyzed by the terpene cyclase spyD to produce both the bicyclic sartorypyrone F and the monocyclic sartorypyrone D. Finally, the last step of the biosynthesis involves the acetylation of the meroterpenoids sartorypyrones D and F by the acetyltransferase SpyB to produce sartorypyrones A and G, respectively. The polypeptide is FAD-dependent monooxygenase spyC (Aspergillus fumigatus (strain ATCC MYA-4609 / CBS 101355 / FGSC A1100 / Af293) (Neosartorya fumigata)).